The following is a 153-amino-acid chain: Small ribosomal subunit protein uS11 (153 aa).

This sequence belongs to the universal ribosomal protein uS11 family.

The polypeptide is Small ribosomal subunit protein uS11 (RPS14) (Chlamydomonas reinhardtii (Chlamydomonas smithii)).